The chain runs to 354 residues: S-adenosylmethionine:tRNA ribosyltransferase-isomerase (354 aa).

This sequence belongs to the QueA family. Monomer.

The protein resides in the cytoplasm. It catalyses the reaction 7-aminomethyl-7-carbaguanosine(34) in tRNA + S-adenosyl-L-methionine = epoxyqueuosine(34) in tRNA + adenine + L-methionine + 2 H(+). Its pathway is tRNA modification; tRNA-queuosine biosynthesis. Transfers and isomerizes the ribose moiety from AdoMet to the 7-aminomethyl group of 7-deazaguanine (preQ1-tRNA) to give epoxyqueuosine (oQ-tRNA). The chain is S-adenosylmethionine:tRNA ribosyltransferase-isomerase from Azorhizobium caulinodans (strain ATCC 43989 / DSM 5975 / JCM 20966 / LMG 6465 / NBRC 14845 / NCIMB 13405 / ORS 571).